A 66-amino-acid chain; its full sequence is Nigrocin-2ISb (66 aa).

Positions 1 to 22 are cleaved as a signal peptide; sequence MFTLKKSMLLLFFLGTINLSLC. Residues 23–43 constitute a propeptide, removed in mature form; the sequence is QEERDAEEERRDEDNAKMEEI. Cysteines 60 and 66 form a disulfide.

Expressed by the skin glands.

It is found in the secreted. Has antimicrobial activity against Gram-negative bacterium E.coli ATCC 8739 (MIC=50 ug), against Gram positive bacteria S.aureus ATCC 6538 (MIC=3.1 ug), methicillin-resistant S.aureus ATCC 43300 (MIC=12.5 ug), B.subtilis ATCC 6633 (MIC=12.5 ug) and against fungus C.albicans ATCC 90028 (MIC=50 ug). In Odorrana ishikawae (Ishikawa's frog), this protein is Nigrocin-2ISb.